Consider the following 71-residue polypeptide: MSLGVLAAGIAVLSGIGAGVGIGIAAGKAVEAVGRQPEASGRVMTFFILGAALCETTAIYGLVMAFMLMGR.

2 helical membrane-spanning segments follow: residues 5–25 and 46–66; these read VLAA…IGIA and FFIL…VMAF.

The protein belongs to the ATPase C chain family. In terms of assembly, F-type ATPases have 2 components, F(1) - the catalytic core - and F(0) - the membrane proton channel. F(1) has five subunits: alpha(3), beta(3), gamma(1), delta(1), epsilon(1). F(0) has three main subunits: a(1), b(2) and c(10-14). The alpha and beta chains form an alternating ring which encloses part of the gamma chain. F(1) is attached to F(0) by a central stalk formed by the gamma and epsilon chains, while a peripheral stalk is formed by the delta and b chains.

It is found in the cell membrane. Functionally, f(1)F(0) ATP synthase produces ATP from ADP in the presence of a proton or sodium gradient. F-type ATPases consist of two structural domains, F(1) containing the extramembraneous catalytic core and F(0) containing the membrane proton channel, linked together by a central stalk and a peripheral stalk. During catalysis, ATP synthesis in the catalytic domain of F(1) is coupled via a rotary mechanism of the central stalk subunits to proton translocation. Key component of the F(0) channel; it plays a direct role in translocation across the membrane. A homomeric c-ring of between 10-14 subunits forms the central stalk rotor element with the F(1) delta and epsilon subunits. The protein is ATP synthase subunit c of Clostridium beijerinckii (strain ATCC 51743 / NCIMB 8052) (Clostridium acetobutylicum).